Here is a 289-residue protein sequence, read N- to C-terminus: Glycine--tRNA ligase alpha subunit (289 aa).

This sequence belongs to the class-II aminoacyl-tRNA synthetase family. In terms of assembly, tetramer of two alpha and two beta subunits.

It is found in the cytoplasm. The enzyme catalyses tRNA(Gly) + glycine + ATP = glycyl-tRNA(Gly) + AMP + diphosphate. The sequence is that of Glycine--tRNA ligase alpha subunit from Rickettsia felis (strain ATCC VR-1525 / URRWXCal2) (Rickettsia azadi).